A 229-amino-acid chain; its full sequence is UPF0758 protein GSU0386 (229 aa).

An MPN domain is found at 107–229 (RFTSPEQVYN…FTSFVSAGLL (123 aa)). Zn(2+) contacts are provided by H178, H180, and D191. The JAMM motif signature appears at 178–191 (HNHPTGDPAPSRED).

It belongs to the UPF0758 family.

The polypeptide is UPF0758 protein GSU0386 (Geobacter sulfurreducens (strain ATCC 51573 / DSM 12127 / PCA)).